The chain runs to 180 residues: Diphosphoinositol polyphosphate phosphohydrolase 2 (180 aa).

Met1 carries the N-acetylmethionine modification. Substrate-binding positions include Arg10, 18–20, and 39–41; these read KKR and SSR. The region spanning 18-144 is the Nudix hydrolase domain; the sequence is KKRAACLCFR…VHAEYLEKLK (127 aa). Residues Gly50 and Glu66 each coordinate Mg(2+). Positions 51 to 72 match the Nudix box motif; that stretch reads GGMEPEEEPGGAAVREVYEEAG. Residue Glu69 is the Proton acceptor of the active site. A Mg(2+)-binding site is contributed by Glu70. Substrate-binding positions include 89–91, Arg115, and Lys133; that span reads RKH.

Belongs to the Nudix hydrolase family. DIPP subfamily. The cofactor is Mg(2+). Mn(2+) is required as a cofactor. As to expression, expressed in heart and, at lower level in skeletal muscle, pancreas and kidney.

The protein localises to the cytoplasm. It carries out the reaction diphospho-myo-inositol polyphosphate + H2O = myo-inositol polyphosphate + phosphate.. The enzyme catalyses 5-diphospho-1D-myo-inositol 1,2,3,4,6-pentakisphosphate + H2O = 1D-myo-inositol hexakisphosphate + phosphate + H(+). It catalyses the reaction 3,5-bis(diphospho)-1D-myo-inositol 1,2,4,6-tetrakisphosphate + H2O = 3-diphospho-1D-myo-inositol 1,2,4,5,6-pentakisphosphate + phosphate + 2 H(+). The catalysed reaction is 5-diphospho-1D-myo-inositol 1,3,4,6-tetrakisphosphate + H2O = 1D-myo-inositol 1,3,4,5,6-pentakisphosphate + phosphate + H(+). It carries out the reaction P(1),P(6)-bis(5'-adenosyl) hexaphosphate + H2O = 2 ATP + 2 H(+). The enzyme catalyses P(1),P(5)-bis(5'-adenosyl) pentaphosphate + H2O = ADP + ATP + 2 H(+). It catalyses the reaction 5-phospho-alpha-D-ribose 1-diphosphate + H2O = alpha-D-ribose 1,5-bisphosphate + phosphate + H(+). Its function is as follows. Cleaves the beta-phosphate from diphosphoinositol polyphosphates such as PP-InsP5 (diphosphoinositol pentakisphosphate), PP-InsP4 (diphosphoinositol tetrakisphosphate) and [PP]2-InsP4 (bisdiphosphoinositol tetrakisphosphate), suggesting that it may play a role in signal transduction. Diadenosine polyphosphates, particularly Ap6A (P(1),P(6)-bis(5a-adenosyl) hexaphosphate) and Ap5A (P(1),P(5)-bis(5'-adenosyl) pentaphosphate) are downstream effectors of a signaling cascade that regulates cardiac KATP channels, can also be substrates, although with lower preference than the diphosphoinositol polyphosphates. Can also catalyze the hydrolysis of 5-phosphoribose 1-diphosphate, generating the glycolytic activator ribose 1,5-bisphosphate. Does not play a role in U8 snoRNA decapping activity. Binds U8 snoRNA. The sequence is that of Diphosphoinositol polyphosphate phosphohydrolase 2 from Homo sapiens (Human).